The following is a 230-amino-acid chain: Ribose-5-phosphate isomerase A (230 aa).

Substrate is bound by residues 29 to 32, 85 to 88, and 98 to 101; these read TGST, DGAD, and KGGG. The active-site Proton acceptor is the E107. K125 is a binding site for substrate.

The protein belongs to the ribose 5-phosphate isomerase family. In terms of assembly, homodimer.

The enzyme catalyses aldehydo-D-ribose 5-phosphate = D-ribulose 5-phosphate. It participates in carbohydrate degradation; pentose phosphate pathway; D-ribose 5-phosphate from D-ribulose 5-phosphate (non-oxidative stage): step 1/1. Functionally, catalyzes the reversible conversion of ribose-5-phosphate to ribulose 5-phosphate. This Staphylococcus haemolyticus (strain JCSC1435) protein is Ribose-5-phosphate isomerase A.